The sequence spans 256 residues: tRNA pseudouridine synthase A 1 (256 aa).

Residue Asp-53 is the Nucleophile of the active site. Substrate is bound at residue Tyr-111.

Belongs to the tRNA pseudouridine synthase TruA family. In terms of assembly, homodimer.

It catalyses the reaction uridine(38/39/40) in tRNA = pseudouridine(38/39/40) in tRNA. Its function is as follows. Formation of pseudouridine at positions 38, 39 and 40 in the anticodon stem and loop of transfer RNAs. This Protochlamydia amoebophila (strain UWE25) protein is tRNA pseudouridine synthase A 1.